The primary structure comprises 171 residues: S-ribosylhomocysteine lyase (171 aa).

The Fe cation site is built by histidine 54, histidine 58, and cysteine 128.

It belongs to the LuxS family. In terms of assembly, homodimer. Fe cation serves as cofactor.

It carries out the reaction S-(5-deoxy-D-ribos-5-yl)-L-homocysteine = (S)-4,5-dihydroxypentane-2,3-dione + L-homocysteine. Involved in the synthesis of autoinducer 2 (AI-2) which is secreted by bacteria and is used to communicate both the cell density and the metabolic potential of the environment. The regulation of gene expression in response to changes in cell density is called quorum sensing. Catalyzes the transformation of S-ribosylhomocysteine (RHC) to homocysteine (HC) and 4,5-dihydroxy-2,3-pentadione (DPD). The protein is S-ribosylhomocysteine lyase of Salmonella agona (strain SL483).